Here is a 487-residue protein sequence, read N- to C-terminus: MLTEQPNWLIQRAQLTPERIALIFENKQMTFRELYHASKQMAARLSKYCSLKKGDRAAILLSNRPEMVYAVHACFLLGAEAVLLNTKLSKQERLFQLEDSQAKLLLMEDGFCREEYESAVATADVDELQAEEAGDIEPEAYVTLDDTATLMYTSGTTGRPKGVQQTFGNHYSSAVSSALNLGVTERDRWLIALPLFHISGLSALFKSVIYGMPVVLHQKFSVTDVLDSISSHQVTIISAVQTMLSGLLAETEQCPESLRCILLGGGPAPLPLLEECRRKQFPVFQSYGLTETCSQIVTLSPEFSMDKLGSAGKPLFSCEIRIEKDGNPCAPFEHGEITVKGPNVMKGYYHRDDANQAAFHNGWFKTGDLGYLDDEGFLYVLDRRSDLIISGGENIYPAEVEAALLAHPAVAEAGVSGSEDPKWGKVPHAFLVLTSSVSSEELTAFCRERLAKYKIPAAFFEVDGLPRNASNKLMRHRLNELRKGELS.

It belongs to the ATP-dependent AMP-binding enzyme family. MenE subfamily.

It catalyses the reaction 2-succinylbenzoate + ATP + CoA = 2-succinylbenzoyl-CoA + AMP + diphosphate. The protein operates within quinol/quinone metabolism; 1,4-dihydroxy-2-naphthoate biosynthesis; 1,4-dihydroxy-2-naphthoate from chorismate: step 5/7. Its pathway is quinol/quinone metabolism; menaquinone biosynthesis. Converts 2-succinylbenzoate (OSB) to 2-succinylbenzoyl-CoA (OSB-CoA). The sequence is that of 2-succinylbenzoate--CoA ligase from Bacillus velezensis (strain DSM 23117 / BGSC 10A6 / LMG 26770 / FZB42) (Bacillus amyloliquefaciens subsp. plantarum).